Here is a 91-residue protein sequence, read N- to C-terminus: MKLPFIFLITLLIFVSSCTSILINESSDEQRIYSFSPTTSPFDPRSLNQELKIGRIGYCFDCARACMRRGKYIRTCSFERKLCRCSISGIK.

A signal peptide spans M1–S20. Intrachain disulfides connect C59–C76, C62–C83, and C66–C85.

The protein belongs to the DEFL family. As to expression, expressed in the pistil. Detected in the synergid cells.

It is found in the secreted. Its function is as follows. Pollen tube attractants guiding pollen tubes to the ovular micropyle. The sequence is that of Protein LURE 1.6 from Arabidopsis thaliana (Mouse-ear cress).